Here is a 253-residue protein sequence, read N- to C-terminus: MGARASQEPRTRVRAGLRVLLPVLLLALLLLALVAPGAQGARGRGAADKNSHRRATSSFSQSVSSLFGEDNVRAAQKLLSRLTERFVQGVDMFLETLWKVWMELLEVLGLDVSNLSQYFSPASVSNSPTRALVLVGVVLLAYWFLSLTLGFTFSLLHLVFGRFFWLVRVILFSMSCVYILHKYEGEPEHAVLPLCVVVAIYFMTGPMGYWRGSPGGLCSPSVEEKLEHLENQVRLLNIRLNRVLENLDRSKDK.

Helical transmembrane passes span Val-19–Gln-39, Ala-131–Phe-151, Phe-164–His-181, and Ala-190–Trp-210. A coiled-coil region spans residues Ser-219 to Lys-253. The residue at position 250 (Ser-250) is a Phosphoserine.

Interacts with LETMD1. Interacts with BRI3. Interacts with BRI3; the interaction is weak. Interacts with TMEM238L.

Its subcellular location is the mitochondrion outer membrane. Functionally, involved in tumorigenesis and may function by stabilizing p53/TP53. The protein is BRI3-binding protein of Mus musculus (Mouse).